Consider the following 345-residue polypeptide: sn-glycerol-3-phosphate import ATP-binding protein UgpC (345 aa).

The ABC transporter domain occupies 4 to 235; that stretch reads IQLLNIKKQY…PKTIFVADFI (232 aa). Position 37–44 (37–44) interacts with ATP; it reads GPSGCGKS.

The protein belongs to the ABC transporter superfamily. sn-glycerol-3-phosphate importer (TC 3.A.1.1.3) family. In terms of assembly, the complex is composed of two ATP-binding proteins (UgpC), two transmembrane proteins (UgpA and UgpE) and a solute-binding protein (UgpB).

It is found in the cell inner membrane. It catalyses the reaction sn-glycerol 3-phosphate(out) + ATP + H2O = sn-glycerol 3-phosphate(in) + ADP + phosphate + H(+). Part of the ABC transporter complex UgpBAEC involved in sn-glycerol-3-phosphate (G3P) import. Responsible for energy coupling to the transport system. The sequence is that of sn-glycerol-3-phosphate import ATP-binding protein UgpC from Bartonella bacilliformis (strain ATCC 35685 / KC583 / Herrer 020/F12,63).